The chain runs to 348 residues: Ferredoxin--NADP reductase 1 (348 aa).

Residues Glu36, Lys44, Tyr48, Ile88, Pro123, Asp285, and Ser326 each coordinate FAD. Positions 329–348 (EKFKKKNEQLKQEKQAQLMN) are disordered.

The protein belongs to the ferredoxin--NADP reductase type 2 family. As to quaternary structure, homodimer. The cofactor is FAD.

The catalysed reaction is 2 reduced [2Fe-2S]-[ferredoxin] + NADP(+) + H(+) = 2 oxidized [2Fe-2S]-[ferredoxin] + NADPH. This Shouchella clausii (strain KSM-K16) (Alkalihalobacillus clausii) protein is Ferredoxin--NADP reductase 1.